The primary structure comprises 130 residues: Large ribosomal subunit protein bL12 (130 aa).

Belongs to the bacterial ribosomal protein bL12 family. As to quaternary structure, homodimer. Part of the ribosomal stalk of the 50S ribosomal subunit. Forms a multimeric L10(L12)X complex, where L10 forms an elongated spine to which 2 to 4 L12 dimers bind in a sequential fashion. Binds GTP-bound translation factors.

Its function is as follows. Forms part of the ribosomal stalk which helps the ribosome interact with GTP-bound translation factors. Is thus essential for accurate translation. This chain is Large ribosomal subunit protein bL12, found in Synechococcus sp. (strain WH7803).